The following is a 465-amino-acid chain: Muscarinic acetylcholine receptor M2 (465 aa).

The Extracellular portion of the chain corresponds to 1–21 (MNNSTNSSNNVALTSPYKTFE). N-linked (GlcNAc...) asparagine glycans are attached at residues Asn-2, Asn-3, and Asn-6. The chain crosses the membrane as a helical span at residues 22 to 44 (VVFIVLVAGSLSLVTIIGNILVM). At 45-58 (VSIKVNRHLQTVNN) the chain is on the cytoplasmic side. A helical membrane pass occupies residues 59–79 (YFLFSLACADLIIGVFSMNLY). At 80 to 96 (TLYTVIGYWPLGPVVCD) the chain is on the extracellular side. Cys-95 and Cys-175 are disulfide-bonded. A helical membrane pass occupies residues 97–118 (LWLALDYVVSNASVMNLLIISF). The Important for signaling signature appears at 119–121 (DRY). Topologically, residues 119-138 (DRYFCVTKPLTYPVKRTTKM) are cytoplasmic. A helical membrane pass occupies residues 139 to 161 (AGMMIAAAWVLSFILWAPAILFW). Residues 162-183 (QFIVGVRTVEDGECYIQFFSNA) are Extracellular-facing. The chain crosses the membrane as a helical span at residues 184–208 (AVTFGTAIAAFYLPVIIMTVLYWHI). The Cytoplasmic segment spans residues 209–386 (SRASKSRIKK…PPSREKKVTR (178 aa)). Residues 217 to 319 (KKDKKEPVAN…SVGHSKDENS (103 aa)) form a disordered region. Residue Ser-231 is modified to Phosphoserine. The span at 253–269 (GLEHNKIQNGKTPRDAV) shows a compositional bias: basic and acidic residues. 2 stretches are compositionally biased toward polar residues: residues 283-292 (NDSTSVSAVA) and 303-312 (DENTVSTSVG). The chain crosses the membrane as a helical span at residues 387–409 (TILAILLAFIITWAPYNVMVLIN). At 410–417 (TFCAPCIP) the chain is on the extracellular side. Cysteines 412 and 415 form a disulfide. The chain crosses the membrane as a helical span at residues 418-441 (NTVWTIGYWLCYINSTINPACYAL). The Important for signaling signature appears at 435–439 (NPACY). Residues 442–465 (CNATFKKTFKHLLMCHYKNIGATR) are Cytoplasmic-facing. Phosphothreonine occurs at positions 445, 449, and 464.

Belongs to the G-protein coupled receptor 1 family. Muscarinic acetylcholine receptor subfamily. CHRM2 sub-subfamily. In terms of assembly, interacts with ARRB1 and ARRB2. Interacts with RACK1; the interaction regulates CHRM2 internalization. Phosphorylated in response to agonist treatment.

Its subcellular location is the cell membrane. It is found in the postsynaptic cell membrane. In terms of biological role, the muscarinic acetylcholine receptor mediates various cellular responses, including inhibition of adenylate cyclase, breakdown of phosphoinositides and modulation of potassium channels through the action of G proteins. Primary transducing effect is adenylate cyclase inhibition. Signaling promotes phospholipase C activity, leading to the release of inositol trisphosphate (IP3); this then triggers calcium ion release into the cytosol. In Bos taurus (Bovine), this protein is Muscarinic acetylcholine receptor M2 (CHRM2).